The chain runs to 238 residues: Small ribosomal subunit protein uS2 (238 aa).

It belongs to the universal ribosomal protein uS2 family.

This is Small ribosomal subunit protein uS2 from Prochlorococcus marinus (strain MIT 9211).